The chain runs to 141 residues: NADPH-dependent 7-cyano-7-deazaguanine reductase (141 aa).

The Thioimide intermediate role is filled by Cys56. The Proton donor role is filled by Asp63. Substrate contacts are provided by residues 78–80 (VEL) and 97–98 (HE).

It belongs to the GTP cyclohydrolase I family. QueF type 1 subfamily.

Its subcellular location is the cytoplasm. The catalysed reaction is 7-aminomethyl-7-carbaguanine + 2 NADP(+) = 7-cyano-7-deazaguanine + 2 NADPH + 3 H(+). It functions in the pathway tRNA modification; tRNA-queuosine biosynthesis. In terms of biological role, catalyzes the NADPH-dependent reduction of 7-cyano-7-deazaguanine (preQ0) to 7-aminomethyl-7-deazaguanine (preQ1). The chain is NADPH-dependent 7-cyano-7-deazaguanine reductase from Trichodesmium erythraeum (strain IMS101).